We begin with the raw amino-acid sequence, 362 residues long: Phosphoserine aminotransferase (362 aa).

2 residues coordinate L-glutamate: Ser-9 and Arg-42. Pyridoxal 5'-phosphate-binding positions include 76–77 (GR), Trp-102, Thr-153, Asp-174, and Gln-197. Lys-198 carries the N6-(pyridoxal phosphate)lysine modification. 239–240 (NT) lines the pyridoxal 5'-phosphate pocket.

This sequence belongs to the class-V pyridoxal-phosphate-dependent aminotransferase family. SerC subfamily. As to quaternary structure, homodimer. It depends on pyridoxal 5'-phosphate as a cofactor.

The protein resides in the cytoplasm. It catalyses the reaction O-phospho-L-serine + 2-oxoglutarate = 3-phosphooxypyruvate + L-glutamate. The enzyme catalyses 4-(phosphooxy)-L-threonine + 2-oxoglutarate = (R)-3-hydroxy-2-oxo-4-phosphooxybutanoate + L-glutamate. Its pathway is amino-acid biosynthesis; L-serine biosynthesis; L-serine from 3-phospho-D-glycerate: step 2/3. It functions in the pathway cofactor biosynthesis; pyridoxine 5'-phosphate biosynthesis; pyridoxine 5'-phosphate from D-erythrose 4-phosphate: step 3/5. Catalyzes the reversible conversion of 3-phosphohydroxypyruvate to phosphoserine and of 3-hydroxy-2-oxo-4-phosphonooxybutanoate to phosphohydroxythreonine. The polypeptide is Phosphoserine aminotransferase (Enterobacter sp. (strain 638)).